The following is an 878-amino-acid chain: Pyruvate, phosphate dikinase (878 aa).

Residues 1–347 (MKKLIYYFGS…LYILQTRTAK (347 aa)) are N-terminal. Arg96 lines the ATP pocket. Positions 348 to 404 (RTAIAAINIAVQMVEEKLISKEQALMRIDPESLNQLLHTRIDYSKGLTSIAEGLPAS) are linker 1. A central region spans residues 405-502 (PGAATGIAVF…VIKQGDIITI (98 aa)). Position 457 is a phosphothreonine; by PDRP1 (Thr457). His459 serves as the catalytic Tele-phosphohistidine intermediate. Residues 503–537 (DGGSGKIFLGEMPLIQPTFSEESKLILDWADEISS) are linker 2. The segment at 538–878 (LKVRANAETV…ASAQAKIKHG (341 aa)) is C-terminal. Positions 565, 621, 749, 770, 771, 772, and 773 each coordinate substrate. Residue Glu749 participates in Mg(2+) binding. Position 773 (Asp773) interacts with Mg(2+). Residue Cys835 is the Proton donor of the active site.

It belongs to the PEP-utilizing enzyme family. In terms of assembly, homodimer. Mg(2+) serves as cofactor. Post-translationally, phosphorylation of Thr-457 in the dark inactivates the enzyme. Dephosphorylation upon light stimulation reactivates the enzyme.

The catalysed reaction is pyruvate + phosphate + ATP = phosphoenolpyruvate + AMP + diphosphate + H(+). Activated by light-induced dephosphorylation. Inhibited by dark-induced phosphorylation. Both reactions are catalyzed by PDRP1. In terms of biological role, catalyzes the reversible phosphorylation of pyruvate and phosphate. This Rickettsia felis (strain ATCC VR-1525 / URRWXCal2) (Rickettsia azadi) protein is Pyruvate, phosphate dikinase (ppdK).